The primary structure comprises 145 residues: MAPKAEKKPAEKKPVEEKSKAEKAPAEKKPKAGKKLPKEAGAGGDKKKKMKKKSVETYKIYIFKVLKQVHPDIGISSKAMGIMNSFINDIFEKLASESSKLARYNKKPTITSREIQTAVRLVLPGELAKHAVSEGTKAVTKFTSS.

Over residues 1-30 (MAPKAEKKPAEKKPVEEKSKAEKAPAEKKP) the composition is skewed to basic and acidic residues. The segment at 1-53 (MAPKAEKKPAEKKPVEEKSKAEKAPAEKKPKAGKKLPKEAGAGGDKKKKMKKK) is disordered. N,N,N-trimethylalanine; alternate is present on A2. A2 carries the post-translational modification N,N-dimethylalanine; alternate. Residue A2 is modified to N-methylalanine; alternate. K4 carries the N6-methyllysine; partial modification. 2 positions are modified to N6-acetyllysine: K7 and K12. An N6,N6-dimethyllysine modification is found at K13. Residues K23, K28, and K34 each carry the N6-acetyllysine modification. N6-acetyllysine; partial is present on K35. A Glycyl lysine isopeptide (Lys-Gly) (interchain with G-Cter in ubiquitin) cross-link involves residue K141.

It belongs to the histone H2B family. In terms of assembly, the nucleosome is a histone octamer containing two molecules each of H2A, H2B, H3 and H4 assembled in one H3-H4 heterotetramer and two H2A-H2B heterodimers. The octamer wraps approximately 147 bp of DNA. Post-translationally, can be acetylated to form H2BK6ac, H2BK11ac, H2BK22ac, H2BK27ac H2BK33ac and H2BK34ac. Mono-, di- or trimethylated at the N-terminus to form H2BA1me1/2/3. H2BA1me2 and H2BA1me3 may be methylated and/or acetylated to form H2BA1me2K3me1, H2BA1me2K3me1K6ac, H2BA1me2K6ac H2BA1me3K6ac, H2BA1me3K6acK11ac and H2BA1me2K3me1K6acK11ac. In terms of processing, monoubiquitinated by BRE1 to form H2BK143ub1 and deubiquitinated by UBP26. Required for heterochromatic histone H3 di- and trimethylation at H3K4me. May give a specific tag for epigenetic transcriptional activation.

Its subcellular location is the nucleus. The protein resides in the chromosome. Its function is as follows. Core component of nucleosome. Nucleosomes wrap and compact DNA into chromatin, limiting DNA accessibility to the cellular machineries which require DNA as a template. Histones thereby play a central role in transcription regulation, DNA repair, DNA replication and chromosomal stability. DNA accessibility is regulated via a complex set of post-translational modifications of histones, also called histone code, and nucleosome remodeling. The polypeptide is Histone H2B.7 (Arabidopsis thaliana (Mouse-ear cress)).